A 228-amino-acid polypeptide reads, in one-letter code: Translin (228 aa).

Residues 86–90 (RFHEH) form a DNA/RNA binding region. Residues 177 to 198 (LDSGFRLLNLKNDSLRKRYDGL) are leucine-zipper. At lysine 187 the chain carries N6-acetyllysine. At serine 190 the chain carries Phosphoserine. Residue lysine 199 is modified to N6-acetyllysine.

Belongs to the translin family. In terms of assembly, ring-shaped heterooctamer of six TSN and two TSNAX subunits, DNA/RNA binding occurs inside the ring.

The protein localises to the cytoplasm. It localises to the nucleus. Its function is as follows. DNA-binding protein that specifically recognizes consensus sequences at the breakpoint junctions in chromosomal translocations, mostly involving immunoglobulin (Ig)/T-cell receptor gene segments. Seems to recognize single-stranded DNA ends generated by staggered breaks occurring at recombination hot spots. In terms of biological role, exhibits both single-stranded and double-stranded endoribonuclease activity. May act as an activator of RNA-induced silencing complex (RISC) by facilitating endonucleolytic cleavage of the siRNA passenger strand. The protein is Translin (Tsn) of Mus musculus (Mouse).